A 374-amino-acid polypeptide reads, in one-letter code: Nuclear hormone receptor family member nhr-57 (374 aa).

A DNA-binding region (nuclear receptor) is located at residues R7 to A84. 2 consecutive NR C4-type zinc fingers follow at residues C10–C30 and C48–C67. The region spanning Q124–Q374 is the NR LBD domain.

It belongs to the nuclear hormone receptor family.

Its subcellular location is the nucleus. Its function is as follows. Orphan nuclear receptor. The polypeptide is Nuclear hormone receptor family member nhr-57 (nhr-57) (Caenorhabditis elegans).